The following is a 369-amino-acid chain: GDSL esterase/lipase At5g41890 (369 aa).

Ser32 serves as the catalytic Nucleophile. Active-site residues include Asp334 and His337.

It belongs to the 'GDSL' lipolytic enzyme family.

The chain is GDSL esterase/lipase At5g41890 from Arabidopsis thaliana (Mouse-ear cress).